A 141-amino-acid polypeptide reads, in one-letter code: Antifungal protein ginkbilobin-like protein 1 (141 aa).

The first 32 residues, 1–32 (MSISSKFQLRSSTSLLLLVALMVVMGMDGAAA), serve as a signal peptide directing secretion. A Gnk2-homologous domain is found at 36-141 (TNFVSSACNT…CFIQYEQHSF (106 aa)). 3 disulfides stabilise this stretch: Cys-43–Cys-119, Cys-95–Cys-104, and Cys-107–Cys-132. Asn-44 contributes to the alpha-D-mannopyranose binding site. Residues Arg-126 and Glu-137 each coordinate alpha-D-mannopyranose.

Exerts antifungal activity through its carbohydrate-binding specificity. This Picea glauca (White spruce) protein is Antifungal protein ginkbilobin-like protein 1.